Reading from the N-terminus, the 425-residue chain is Serine hydroxymethyltransferase (425 aa).

(6S)-5,6,7,8-tetrahydrofolate-binding positions include Leu123 and Gly127 to Leu129. An N6-(pyridoxal phosphate)lysine modification is found at Lys232. Residue Glu248 coordinates (6S)-5,6,7,8-tetrahydrofolate.

This sequence belongs to the SHMT family. Homodimer. Requires pyridoxal 5'-phosphate as cofactor.

It is found in the cytoplasm. It carries out the reaction (6R)-5,10-methylene-5,6,7,8-tetrahydrofolate + glycine + H2O = (6S)-5,6,7,8-tetrahydrofolate + L-serine. The protein operates within one-carbon metabolism; tetrahydrofolate interconversion. It functions in the pathway amino-acid biosynthesis; glycine biosynthesis; glycine from L-serine: step 1/1. In terms of biological role, catalyzes the reversible interconversion of serine and glycine with tetrahydrofolate (THF) serving as the one-carbon carrier. This reaction serves as the major source of one-carbon groups required for the biosynthesis of purines, thymidylate, methionine, and other important biomolecules. Also exhibits THF-independent aldolase activity toward beta-hydroxyamino acids, producing glycine and aldehydes, via a retro-aldol mechanism. The sequence is that of Serine hydroxymethyltransferase from Anaplasma phagocytophilum (strain HZ).